Here is a 159-residue protein sequence, read N- to C-terminus: Aphid transmission protein (159 aa).

This sequence belongs to the caulimoviridae ORF II family.

In terms of biological role, this protein is involved in virus transmission. In Cauliflower mosaic virus (strain NY8153) (CaMV), this protein is Aphid transmission protein.